The chain runs to 266 residues: MYFPPSSVPKRLVLVHISAVVAIKLLLIRSVSSLNMTNAYLQHKCIVSEGKYQPGSVYEKNLNIIIRASSAGDFRSGFDLVFRGKGSNFVTLMYQCRGDSYWSRCRSCYTTALSALRKRCSRNKGGIIWYDQCLMEISSIRNEGKLDYNNNFCMSNTKNASGSPLEFKQKMVDFLLNLGLKATSEDNMDKYNQAVMYAMGEERVGTKKLYAMVQCTKDLWLKTCYACLEWIILKESDCCDGKLGGRVFSTSCNYRYELYPFIKPTV.

The first 33 residues, 1–33, serve as a signal peptide directing secretion; it reads MYFPPSSVPKRLVLVHISAVVAIKLLLIRSVSS. Gnk2-homologous domains follow at residues 40–142 and 148–261; these read YLQH…SIRN and YNNN…LYPF.

Belongs to the cysteine-rich repeat secretory protein family.

The protein localises to the secreted. This Arabidopsis thaliana (Mouse-ear cress) protein is Putative cysteine-rich repeat secretory protein 20 (CRRSP20).